A 318-amino-acid polypeptide reads, in one-letter code: Nitrate reductase [NADH] (318 aa).

Residues 216 to 291 form the Cytochrome b5 heme-binding domain; it reads AKSFTMAEVE…LLEYYIGELA (76 aa). Positions 251 and 274 each coordinate heme.

Belongs to the nitrate reductase family. Homodimer. FAD is required as a cofactor. It depends on heme as a cofactor. Mo-molybdopterin serves as cofactor.

It carries out the reaction nitrite + NAD(+) + H2O = nitrate + NADH + H(+). In terms of biological role, nitrate reductase is a key enzyme involved in the first step of nitrate assimilation in plants, fungi and bacteria. The protein is Nitrate reductase [NADH] of Chlorella vulgaris (Green alga).